Here is a 499-residue protein sequence, read N- to C-terminus: Glycerol kinase (499 aa).

ADP is bound at residue threonine 12. ATP contacts are provided by threonine 12, threonine 13, and serine 14. Sn-glycerol 3-phosphate is bound at residue threonine 12. Arginine 16 contributes to the ADP binding site. Residues arginine 82, glutamate 83, tyrosine 134, and aspartate 245 each coordinate sn-glycerol 3-phosphate. Residues arginine 82, glutamate 83, tyrosine 134, aspartate 245, and glutamine 246 each coordinate glycerol. Positions 267 and 311 each coordinate ADP. Threonine 267, glycine 311, glutamine 315, and glycine 412 together coordinate ATP. ADP is bound by residues glycine 412 and asparagine 416.

This sequence belongs to the FGGY kinase family.

It catalyses the reaction glycerol + ATP = sn-glycerol 3-phosphate + ADP + H(+). It participates in polyol metabolism; glycerol degradation via glycerol kinase pathway; sn-glycerol 3-phosphate from glycerol: step 1/1. Inhibited by fructose 1,6-bisphosphate (FBP). Its function is as follows. Key enzyme in the regulation of glycerol uptake and metabolism. Catalyzes the phosphorylation of glycerol to yield sn-glycerol 3-phosphate. The chain is Glycerol kinase from Brucella anthropi (strain ATCC 49188 / DSM 6882 / CCUG 24695 / JCM 21032 / LMG 3331 / NBRC 15819 / NCTC 12168 / Alc 37) (Ochrobactrum anthropi).